The primary structure comprises 538 residues: Cytochrome P450 52A4 (538 aa).

The helical transmembrane segment at 27–46 threads the bilayer; the sequence is WYILIPTILLTLNFLSILHT. A heme-binding site is contributed by Cys485.

This sequence belongs to the cytochrome P450 family. It depends on heme as a cofactor.

It localises to the membrane. Its function is as follows. Together with an NADPH cytochrome P450 the enzyme system catalyzes the terminal hydroxylation as the first step in the assimilation of alkanes and fatty acids. The polypeptide is Cytochrome P450 52A4 (CYP52A4) (Candida maltosa (Yeast)).